A 406-amino-acid polypeptide reads, in one-letter code: Kelch domain-containing protein 2 (406 aa).

Kelch repeat units follow at residues 31 to 85, 92 to 136, 148 to 207, 221 to 259, 271 to 311, and 322 to 359; these read ERSG…NTEG, SGSC…ERID, LGVW…IWSQ, HACA…NELI, HSLT…IKFN, and HTAC…IFSV.

As to quaternary structure, component of a CRL2(KLHDC2) E3 ubiquitin-protein ligase complex, also named ECS(KLHDC2) complex, composed of CUL2, Elongin BC (ELOB and ELOC), RBX1 and substrate-specific adapter KLHDC2. May form oligomers as a KLHDC2-ELOB-ELOC complex; this interaction is autoinhibitory for the E3 ligase complex as the substrate-binding site of KLHDC2 is blocked in the oligomer. Interacts with CREB3; interaction is direct and specific as it does not interact with CREB1, ATF4, ATF6, JUN, FOS, CEBPA or herpes simplex virus transactivator VP16. In terms of processing, autoubiquitinated by the CRL2(KLHDC2) E3 ligase complex.

The protein localises to the nucleus. The protein operates within protein modification; protein ubiquitination. Its function is as follows. Substrate-recognition component of a Cul2-RING (CRL2) E3 ubiquitin-protein ligase complex of the DesCEND (destruction via C-end degrons) pathway, which recognizes a C-degron located at the extreme C terminus of target proteins, leading to their ubiquitination and degradation. The C-degron recognized by the DesCEND pathway is usually a motif of less than ten residues and can be present in full-length proteins, truncated proteins or proteolytically cleaved forms. The CRL2(KLHDC2) complex specifically recognizes proteins with a diglycine (Gly-Gly) at the C-terminus, leading to their ubiquitination and degradation. The CRL2(KLHDC2) complex mediates ubiquitination and degradation of truncated SELENOK and SELENOS selenoproteins produced by failed UGA/Sec decoding, which end with a diglycine. The CRL2(KLHDC2) complex also recognizes proteolytically cleaved proteins ending with Gly-Gly, such as the N-terminal fragment of USP1, leading to their degradation. May also act as an indirect repressor of CREB3-mediated transcription by interfering with CREB3-DNA-binding. The polypeptide is Kelch domain-containing protein 2 (Bos taurus (Bovine)).